The chain runs to 165 residues: Cyanate hydratase (165 aa).

Residues Arg-106, Glu-109, and Ser-132 contribute to the active site.

Belongs to the cyanase family.

It catalyses the reaction cyanate + hydrogencarbonate + 3 H(+) = NH4(+) + 2 CO2. Its function is as follows. Catalyzes the reaction of cyanate with bicarbonate to produce ammonia and carbon dioxide. In Laccaria bicolor (strain S238N-H82 / ATCC MYA-4686) (Bicoloured deceiver), this protein is Cyanate hydratase.